We begin with the raw amino-acid sequence, 522 residues long: Ribonuclease Y (522 aa).

The helical transmembrane segment at 7-23 (SGSSAAVISGLVGFYIS) threads the bilayer. Positions 212–278 (LTNLVHLNDD…TKTLELLIQD (67 aa)) constitute a KH domain. Positions 338 to 431 (ALSHTLEVAH…VCAADALSAA (94 aa)) constitute an HD domain.

It belongs to the RNase Y family.

It is found in the cell membrane. In terms of biological role, endoribonuclease that initiates mRNA decay. The sequence is that of Ribonuclease Y from Sulfurimonas denitrificans (strain ATCC 33889 / DSM 1251) (Thiomicrospira denitrificans (strain ATCC 33889 / DSM 1251)).